We begin with the raw amino-acid sequence, 93 residues long: MGFRIAGIVRRTSFYTTQAASKRVDVPKGYAAVYVGDKMRRFTIPVSYLNEPSFQELLSQAEEEFGYDHPMGGLTIPCKEEEFLNVTAHLNEL.

It belongs to the ARG7 family.

The protein is Auxin-induced protein 10A5 of Glycine max (Soybean).